Consider the following 35-residue polypeptide: Entry-fusion complex protein OPG076 (35 aa).

The helical transmembrane segment at 2-22 threads the bilayer; it reads LVVIMFFIAFAFCSWLSYSYL. At 23–35 the chain is on the virion surface side; it reads RPYISTKELNKSR.

Belongs to the orthopoxvirus OPG076 family. As to quaternary structure, component of the entry fusion complex (EFC) composed of OPG053, OPG076, OPG086, OPG094, OPG095, OPG099, OPG107, OPG143, OPG104, OPG147 and OPG155. Except for OPG095 and OPG053, each of the EFC proteins is required for assembly or stability of the complex. In terms of processing, unglycosylated because produced in viral factories instead of the classic ER -Golgi route.

The protein localises to the virion membrane. Functionally, component of the entry fusion complex (EFC), which consists of 11 proteins. During cell infection, this complex mediates entry of the virion core into the host cytoplasm by a two-step mechanism consisting of lipid mixing of the viral and cellular membranes and subsequent pore formation. The sequence is that of Entry-fusion complex protein OPG076 (OPG076) from Vaccinia virus (strain Copenhagen) (VACV).